Here is a 229-residue protein sequence, read N- to C-terminus: Platelet-activating factor acetylhydrolase IB subunit alpha2 (229 aa).

Residues S48, D193, and H196 contribute to the active site.

The protein belongs to the 'GDSL' lipolytic enzyme family. Platelet-activating factor acetylhydrolase IB beta/gamma subunits subfamily. As to quaternary structure, forms a catalytic dimer which is either homodimer (alpha2/alpha2 homodimer) or heterodimer with PAFAH1B3 (alpha2/alpha1 heterodimer). Component of the cytosolic (PAF-AH (I)) heterotetrameric enzyme, which is composed of PAFAH1B1 (beta), PAFAH1B2 (alpha2) and PAFAH1B3 (alpha1) subunits. The catalytic activity of the enzyme resides in the alpha1 (PAFAH1B3) and alpha2 (PAFAH1B2) subunits, whereas the beta subunit (PAFAH1B1) has regulatory activity. Trimer formation is not essential for the catalytic activity.

The protein resides in the cytoplasm. The enzyme catalyses a 1-O-alkyl-2-acetyl-sn-glycero-3-phosphocholine + H2O = a 1-O-alkyl-sn-glycero-3-phosphocholine + acetate + H(+). It catalyses the reaction 1-O-hexadecyl-2-acetyl-sn-glycero-3-phosphocholine + H2O = 1-O-hexadecyl-sn-glycero-3-phosphocholine + acetate + H(+). It carries out the reaction 1-O-hexadecyl-2-acetyl-sn-glycero-3-phosphate + H2O = 1-O-hexadecyl-sn-glycero-3-phosphate + acetate + H(+). The catalysed reaction is 1-O-hexadecyl-2-acetyl-sn-glycero-3-phosphoethanolamine + H2O = 1-O-hexadecyl-sn-glycero-3-phosphoethanolamine + acetate + H(+). Its function is as follows. Alpha2 catalytic subunit of the cytosolic type I platelet-activating factor (PAF) acetylhydrolase (PAF-AH (I)) heterotetrameric enzyme that catalyzes the hydrolyze of the acetyl group at the sn-2 position of PAF and its analogs and modulates the action of PAF. The protein is Platelet-activating factor acetylhydrolase IB subunit alpha2 (PAFAH1B2) of Gallus gallus (Chicken).